The sequence spans 317 residues: WSCD family member AAEL009094 (317 aa).

A helical membrane pass occupies residues 8–28; that stretch reads LFGLAGTILVYIGGILFLSFV. Residues Asn-150, Asn-226, and Asn-232 are each glycosylated (N-linked (GlcNAc...) asparagine).

This sequence belongs to the WSCD family.

Its subcellular location is the membrane. This is WSCD family member AAEL009094 from Aedes aegypti (Yellowfever mosquito).